The chain runs to 640 residues: Zinc finger protein 549 (640 aa).

In terms of domain architecture, KRAB spans 27 to 140 (VTFEDIAVYF…PYTSVASGKW (114 aa)). The segment at 217–241 (FQQRRYKCEQVFNEKVHVTEHQRVH) adopts a C2H2-type 1; degenerate zinc-finger fold. A Glycyl lysine isopeptide (Lys-Gly) (interchain with G-Cter in SUMO2) cross-link involves residue Lys-223. Residues 247-269 (YKRREYGKSLNSKYLFVEHQRTH) form a C2H2-type 2; degenerate zinc finger. 13 C2H2-type zinc fingers span residues 275–298 (YVCN…QRIH), 304–326 (YVCI…QRTH), 332–355 (YVCN…QRIH), 361–383 (YVCM…QRVH), 389–411 (YQCS…HRIH), 417–439 (YECK…QRIH), 445–467 (YVCI…QRIH), 473–495 (YECS…HKIH), 501–523 (YECS…QRIH), 529–551 (CECN…QKVH), 557–579 (CECS…QKVH), 585–607 (YNCT…QRIH), and 613–635 (YECG…QKVH).

Belongs to the krueppel C2H2-type zinc-finger protein family.

The protein resides in the nucleus. Functionally, may be involved in transcriptional regulation. This chain is Zinc finger protein 549 (ZNF549), found in Homo sapiens (Human).